A 327-amino-acid chain; its full sequence is ATPase ASNA1 homolog (327 aa).

26–33 (KGGVGKTT) contacts ATP. Residue aspartate 57 is part of the active site. The ATP site is built by glutamate 238 and asparagine 265. Residues cysteine 274 and cysteine 277 each contribute to the Zn(2+) site.

Belongs to the arsA ATPase family. In terms of assembly, homodimer.

It is found in the cytoplasm. It localises to the endoplasmic reticulum. Its function is as follows. ATPase required for the post-translational delivery of tail-anchored (TA) proteins to the endoplasmic reticulum. Recognizes and selectively binds the transmembrane domain of TA proteins in the cytosol. This complex then targets to the endoplasmic reticulum by membrane-bound receptors, where the tail-anchored protein is released for insertion. This process is regulated by ATP binding and hydrolysis. ATP binding drives the homodimer towards the closed dimer state, facilitating recognition of newly synthesized TA membrane proteins. ATP hydrolysis is required for insertion. Subsequently, the homodimer reverts towards the open dimer state, lowering its affinity for the membrane-bound receptor, and returning it to the cytosol to initiate a new round of targeting. This is ATPase ASNA1 homolog from Entamoeba dispar (strain ATCC PRA-260 / SAW760).